A 587-amino-acid polypeptide reads, in one-letter code: Succinate dehydrogenase flavoprotein subunit (587 aa).

FAD contacts are provided by residues 15 to 20, 39 to 54, and D223; these read GAGGAG and SKVF…AQGG. A Tele-8alpha-FAD histidine modification is found at H47. Residues H244 and T256 each contribute to the substrate site. The Proton acceptor role is filled by R288. Substrate is bound at residue H355. E389 provides a ligand contact to FAD. R400 is a binding site for substrate. 405 to 406 is a binding site for FAD; sequence SL.

It belongs to the FAD-dependent oxidoreductase 2 family. FRD/SDH subfamily. In terms of assembly, part of an enzyme complex containing four subunits: a flavoprotein, an iron-sulfur protein, cytochrome b-556 and a hydrophobic protein. It depends on FAD as a cofactor.

It localises to the cell inner membrane. The enzyme catalyses a quinone + succinate = fumarate + a quinol. It functions in the pathway carbohydrate metabolism; tricarboxylic acid cycle; fumarate from succinate (bacterial route): step 1/1. This chain is Succinate dehydrogenase flavoprotein subunit (sdhA), found in Coxiella burnetii (strain RSA 493 / Nine Mile phase I).